The sequence spans 439 residues: Dolichyl-diphosphooligosaccharide--protein glycosyltransferase 48 kDa subunit (439 aa).

A signal peptide spans 1–26 (MATRAARVWSGWWLLLLPLLGLAGAS). The Lumenal segment spans residues 27–409 (GPRTLVLLDN…QYERFIPSAY (383 aa)). The helical transmembrane segment at 410 to 430 (PYYASAFSMMLGLFIFSVVFL) threads the bilayer. Over 431–439 (HMKEKEKSD) the chain is Cytoplasmic.

Belongs to the DDOST 48 kDa subunit family. As to quaternary structure, component of the oligosaccharyltransferase (OST) complex. OST exists in two different complex forms which contain common core subunits RPN1, RPN2, OST48, OST4, DAD1 and TMEM258, either STT3A or STT3B as catalytic subunits, and form-specific accessory subunits. STT3A complex assembly occurs through the formation of 3 subcomplexes. Subcomplex 1 contains RPN1 and TMEM258, subcomplex 2 contains the STT3A-specific subunits STT3A, DC2/OSTC, and KCP2 as well as the core subunit OST4, and subcomplex 3 contains RPN2, DAD1, and OST48. The STT3A complex can form stable complexes with the Sec61 complex or with both the Sec61 and TRAP complexes. Interacts with SMIM22.

It localises to the endoplasmic reticulum membrane. It participates in protein modification; protein glycosylation. Its function is as follows. Subunit of the oligosaccharyl transferase (OST) complex that catalyzes the initial transfer of a defined glycan (Glc(3)Man(9)GlcNAc(2) in eukaryotes) from the lipid carrier dolichol-pyrophosphate to an asparagine residue within an Asn-X-Ser/Thr consensus motif in nascent polypeptide chains, the first step in protein N-glycosylation. N-glycosylation occurs cotranslationally and the complex associates with the Sec61 complex at the channel-forming translocon complex that mediates protein translocation across the endoplasmic reticulum (ER). All subunits are required for a maximal enzyme activity. Required for the assembly of both SST3A- and SS3B-containing OST complexes. In Bos taurus (Bovine), this protein is Dolichyl-diphosphooligosaccharide--protein glycosyltransferase 48 kDa subunit.